A 118-amino-acid chain; its full sequence is Large ribosomal subunit protein bL19 (118 aa).

The protein belongs to the bacterial ribosomal protein bL19 family.

In terms of biological role, this protein is located at the 30S-50S ribosomal subunit interface and may play a role in the structure and function of the aminoacyl-tRNA binding site. The polypeptide is Large ribosomal subunit protein bL19 (Metamycoplasma arthritidis (strain 158L3-1) (Mycoplasma arthritidis)).